Reading from the N-terminus, the 213-residue chain is Orotate phosphoribosyltransferase (213 aa).

K26 contributes to the 5-phospho-alpha-D-ribose 1-diphosphate binding site. Residue 34–35 coordinates orotate; it reads FF. Residues 72-73, R99, K100, K103, H105, and 124-132 contribute to the 5-phospho-alpha-D-ribose 1-diphosphate site; these read YK and DDVITAGTA. Residues T128 and R156 each coordinate orotate.

Belongs to the purine/pyrimidine phosphoribosyltransferase family. PyrE subfamily. As to quaternary structure, homodimer. The cofactor is Mg(2+).

It carries out the reaction orotidine 5'-phosphate + diphosphate = orotate + 5-phospho-alpha-D-ribose 1-diphosphate. It participates in pyrimidine metabolism; UMP biosynthesis via de novo pathway; UMP from orotate: step 1/2. Functionally, catalyzes the transfer of a ribosyl phosphate group from 5-phosphoribose 1-diphosphate to orotate, leading to the formation of orotidine monophosphate (OMP). The protein is Orotate phosphoribosyltransferase of Haemophilus influenzae (strain ATCC 51907 / DSM 11121 / KW20 / Rd).